The sequence spans 250 residues: 3-deoxy-manno-octulosonate cytidylyltransferase (250 aa).

This sequence belongs to the KdsB family.

The protein localises to the cytoplasm. It carries out the reaction 3-deoxy-alpha-D-manno-oct-2-ulosonate + CTP = CMP-3-deoxy-beta-D-manno-octulosonate + diphosphate. It participates in nucleotide-sugar biosynthesis; CMP-3-deoxy-D-manno-octulosonate biosynthesis; CMP-3-deoxy-D-manno-octulosonate from 3-deoxy-D-manno-octulosonate and CTP: step 1/1. It functions in the pathway bacterial outer membrane biogenesis; lipopolysaccharide biosynthesis. Functionally, activates KDO (a required 8-carbon sugar) for incorporation into bacterial lipopolysaccharide in Gram-negative bacteria. The protein is 3-deoxy-manno-octulosonate cytidylyltransferase of Legionella pneumophila (strain Paris).